Here is a 147-residue protein sequence, read N- to C-terminus: Large ribosomal subunit protein uL16 (147 aa).

Belongs to the universal ribosomal protein uL16 family. In terms of assembly, part of the 50S ribosomal subunit.

Functionally, binds 23S rRNA and is also seen to make contacts with the A and possibly P site tRNAs. The protein is Large ribosomal subunit protein uL16 of Clostridium novyi (strain NT).